A 36-amino-acid polypeptide reads, in one-letter code: AVDCNTVKSDLVGCVGYLPSGTGNPTPQCCDGVVKL.

It belongs to the plant LTP family. Post-translationally, phosphorylated by Ca(2+)-dependent protein kinase.

In terms of biological role, plant non-specific lipid-transfer proteins transfer phospholipids as well as galactolipids across membranes. May play a role in wax or cutin deposition in the cell walls of expanding epidermal cells and certain secretory tissues. The protein is Probable non-specific lipid-transfer protein of Pinus pinea (Italian stone pine).